Reading from the N-terminus, the 305-residue chain is tRNA uridine(34) hydroxylase (305 aa).

The Rhodanese domain occupies 125-219 (ADENTVVVDT…YLEEVPREDS (95 aa)). Cys179 functions as the Cysteine persulfide intermediate in the catalytic mechanism.

It belongs to the TrhO family.

It carries out the reaction uridine(34) in tRNA + AH2 + O2 = 5-hydroxyuridine(34) in tRNA + A + H2O. Functionally, catalyzes oxygen-dependent 5-hydroxyuridine (ho5U) modification at position 34 in tRNAs. In Brucella anthropi (strain ATCC 49188 / DSM 6882 / CCUG 24695 / JCM 21032 / LMG 3331 / NBRC 15819 / NCTC 12168 / Alc 37) (Ochrobactrum anthropi), this protein is tRNA uridine(34) hydroxylase.